Reading from the N-terminus, the 378-residue chain is Alcohol dehydrogenase (378 aa).

The Fe cation site is built by Asp195, His199, His262, and His274.

The protein belongs to the iron-containing alcohol dehydrogenase family. The cofactor is Fe(2+). Mn(2+) is required as a cofactor.

The catalysed reaction is a primary alcohol + NAD(+) = an aldehyde + NADH + H(+). It carries out the reaction butan-1-ol + NAD(+) = butanal + NADH + H(+). It catalyses the reaction hexan-1-ol + NAD(+) = hexanal + NADH + H(+). The enzyme catalyses ethanol + NAD(+) = acetaldehyde + NADH + H(+). Its function is as follows. Thermostable type III alcohol dehydrogenase. For oxidation activity, the best substrates are 1-butanol and 1-hexanol, followed by ethanol. Shows lower activity with ethylene glycol, isopentanol, isopropanol and glycerol. Displays higher reduction activity in the presence of butanal, followed by acetaldehyde. Has lower activity with hexanal and acetone. In Thermococcus barophilus, this protein is Alcohol dehydrogenase.